A 215-amino-acid polypeptide reads, in one-letter code: MKKFTQVTGVVAPIDRANVDTDMIIPKQFLKSIKRSGFGPNLFDELRYLDEGQPDADCSKRPINPDFVLNQPRYQGASIMLARRNFGCGSSREHAPWALDDYGFRAVIAPSFADIFFNNCFKNGLLPIVLEEKEVDKLFEETLATEGYQLTVDLERKKVVKPDGTELSFEVDEFRQHCLLKGLDEIGVTLEDRDAIGAYEERRKAEAPWMFLGVQ.

It belongs to the LeuD family. LeuD type 1 subfamily. Heterodimer of LeuC and LeuD.

The catalysed reaction is (2R,3S)-3-isopropylmalate = (2S)-2-isopropylmalate. Its pathway is amino-acid biosynthesis; L-leucine biosynthesis; L-leucine from 3-methyl-2-oxobutanoate: step 2/4. Functionally, catalyzes the isomerization between 2-isopropylmalate and 3-isopropylmalate, via the formation of 2-isopropylmaleate. This Hahella chejuensis (strain KCTC 2396) protein is 3-isopropylmalate dehydratase small subunit.